The following is a 247-amino-acid chain: tRNA pseudouridine synthase A (247 aa).

Asp53 (nucleophile) is an active-site residue. Position 111 (Tyr111) interacts with substrate.

The protein belongs to the tRNA pseudouridine synthase TruA family. In terms of assembly, homodimer.

It carries out the reaction uridine(38/39/40) in tRNA = pseudouridine(38/39/40) in tRNA. Functionally, formation of pseudouridine at positions 38, 39 and 40 in the anticodon stem and loop of transfer RNAs. The chain is tRNA pseudouridine synthase A from Bacillus velezensis (strain DSM 23117 / BGSC 10A6 / LMG 26770 / FZB42) (Bacillus amyloliquefaciens subsp. plantarum).